We begin with the raw amino-acid sequence, 129 residues long: Glycine cleavage system H protein (129 aa).

In terms of domain architecture, Lipoyl-binding spans 24–106 (SYTVGISEHA…YGDGWFFRIM (83 aa)). At K65 the chain carries N6-lipoyllysine.

Belongs to the GcvH family. In terms of assembly, the glycine cleavage system is composed of four proteins: P, T, L and H. It depends on (R)-lipoate as a cofactor.

In terms of biological role, the glycine cleavage system catalyzes the degradation of glycine. The H protein shuttles the methylamine group of glycine from the P protein to the T protein. This is Glycine cleavage system H protein from Shewanella loihica (strain ATCC BAA-1088 / PV-4).